Consider the following 171-residue polypeptide: Dual specificity protein phosphatase OPG106 (171 aa).

Positions 23–171 constitute a Tyrosine-protein phosphatase domain; it reads SPTIMTRVTN…IIEKYVIDKN (149 aa). Cys110 acts as the Phosphocysteine intermediate in catalysis.

Belongs to the protein-tyrosine phosphatase family. Non-receptor class dual specificity subfamily. In terms of assembly, homodimer.

The protein localises to the virion. The protein resides in the host cytoplasm. The catalysed reaction is O-phospho-L-tyrosyl-[protein] + H2O = L-tyrosyl-[protein] + phosphate. It catalyses the reaction O-phospho-L-seryl-[protein] + H2O = L-seryl-[protein] + phosphate. Inhibited by NSC-62914, NSC-28086, NSC-105687, NSC-23173, 540211 and 217691 with IC50 values of 48, 51, 212, 342, 4 and 11 uM, respectively. Functionally, serine/tyrosine phosphatase which down-regulates cellular antiviral response by dephosphorylating activated host STAT1 and blocking interferon (IFN)-stimulated innate immune responses. Dephosphorylates the OPG144 protein. In Homo sapiens (Human), this protein is Dual specificity protein phosphatase OPG106 (OPG106).